We begin with the raw amino-acid sequence, 952 residues long: 2-oxoglutarate dehydrogenase E1 component (952 aa).

Belongs to the alpha-ketoglutarate dehydrogenase family. In terms of assembly, homodimer. Part of the 2-oxoglutarate dehydrogenase (OGDH) complex composed of E1 (2-oxoglutarate dehydrogenase), E2 (dihydrolipoamide succinyltransferase) and E3 (dihydrolipoamide dehydrogenase); the complex contains multiple copies of the three enzymatic components (E1, E2 and E3). Requires thiamine diphosphate as cofactor.

It carries out the reaction N(6)-[(R)-lipoyl]-L-lysyl-[protein] + 2-oxoglutarate + H(+) = N(6)-[(R)-S(8)-succinyldihydrolipoyl]-L-lysyl-[protein] + CO2. In terms of biological role, E1 component of the 2-oxoglutarate dehydrogenase (OGDH) complex which catalyzes the decarboxylation of 2-oxoglutarate, the first step in the conversion of 2-oxoglutarate to succinyl-CoA and CO(2). This Geobacillus sp. (strain WCH70) protein is 2-oxoglutarate dehydrogenase E1 component.